A 132-amino-acid chain; its full sequence is ER membrane protein complex subunit 5 (132 aa).

Residues 1 to 3 (MAS) lie on the Cytoplasmic side of the membrane. A helical transmembrane segment spans residues 4–22 (SIWKGLVGIGLFALAHAAF). Topologically, residues 23–43 (SAAQHRSYMRLTEKEDETLPI) are lumenal. The helical transmembrane segment at 44-63 (DIVLQTLLAFIVACYGIVHI) threads the bilayer. Residues 64 to 132 (AGEFKDMDAT…KLSKLESMHR (69 aa)) lie on the Cytoplasmic side of the membrane.

This sequence belongs to the membrane magnesium transporter (TC 1.A.67) family. As to quaternary structure, component of the ER membrane protein complex (EMC).

It is found in the endoplasmic reticulum membrane. The protein resides in the golgi apparatus membrane. The protein localises to the early endosome membrane. Functionally, part of the endoplasmic reticulum membrane protein complex (EMC) that enables the energy-independent insertion into endoplasmic reticulum membranes of newly synthesized membrane proteins. Preferentially accommodates proteins with transmembrane domains that are weakly hydrophobic or contain destabilizing features such as charged and aromatic residues. Involved in the cotranslational insertion of multi-pass membrane proteins in which stop-transfer membrane-anchor sequences become ER membrane spanning helices. It is also required for the post-translational insertion of tail-anchored/TA proteins in endoplasmic reticulum membranes. By mediating the proper cotranslational insertion of N-terminal transmembrane domains in an N-exo topology, with translocated N-terminus in the lumen of the ER, controls the topology of multi-pass membrane proteins like the G protein-coupled receptors. By regulating the insertion of various proteins in membranes, it is indirectly involved in many cellular processes. May be involved in Mg(2+) transport. The chain is ER membrane protein complex subunit 5 from Xenopus tropicalis (Western clawed frog).